The sequence spans 628 residues: Otolith matrix protein OMM-64 (628 aa).

The signal sequence occupies residues 1 to 20 (MLSRLLIVPLIFALAGLAIS). Positions 43 to 628 (KGDKDGGGLT…AAATALAAQS (586 aa)) are disordered. Residues 78-93 (DSSPDTTDTPDASSSD) are compositionally biased toward low complexity. Residues 182 to 214 (TESPGSDSAESPGSDSAESPGSDSTESPGSDST) are compositionally biased toward polar residues. 3 stretches are compositionally biased toward basic and acidic residues: residues 246-266 (ETDK…ATDK), 276-285 (ELDGKAHAED), and 311-343 (RPEK…RDSA). N-linked (GlcNAc...) asparagine glycosylation is present at Asn318. 5 stretches are compositionally biased toward acidic residues: residues 449–462 (DSQE…EAEP), 477–489 (EPQE…DTDD), 514–536 (DKED…MDKD), 544–556 (DSVD…DAEP), and 565–578 (DEID…PDSE). The span at 613–628 (ASQAADAAATALAAQS) shows a compositional bias: low complexity.

Specifically expressed in otolith matrix-producing cells.

It localises to the secreted. The protein resides in the extracellular space. The protein localises to the extracellular matrix. Functionally, calcium-binding component of otoliths, a calcium carbonate structure of the inner ear involved in hearing and balance sensing. Binds calcium. The sequence is that of Otolith matrix protein OMM-64 from Oncorhynchus mykiss (Rainbow trout).